The primary structure comprises 107 residues: U1-lycotoxin-Ls1b (107 aa).

A signal peptide spans 1–20; sequence MMKVLVVFALLVTLISYSSS. Residues 21-41 constitute a propeptide that is removed on maturation; that stretch reads EGIDDLEADELLSLMANEQTR. Intrachain disulfides connect C44/C59, C51/C68, C58/C86, and C70/C84.

The protein belongs to the neurotoxin 19 (CSTX) family. 04 (U1-Lctx) subfamily. In terms of tissue distribution, expressed by the venom gland.

It localises to the secreted. This chain is U1-lycotoxin-Ls1b, found in Lycosa singoriensis (Wolf spider).